The primary structure comprises 578 residues: PTS system fructose-specific EIIB'BC component (578 aa).

PTS EIIB type-2 domains follow at residues 1 to 99 (MSKI…EALA) and 119 to 214 (VVAI…AALA). The active-site Phosphocysteine intermediate; for EIIB activity is the C125. A Phosphocysteine; by EIIA modification is found at C125. A PTS EIIC type-2 domain is found at 241–576 (PYMHLLTGVS…KKPIPAEERA (336 aa)). A run of 9 helical transmembrane segments spans residues 251 to 271 (YMLP…VFGI), 284 to 304 (LMAI…AGFI), 319 to 339 (IGGM…VAGF), 364 to 384 (VLIL…YVVG), 405 to 425 (NAVV…GGPI), 428 to 450 (AAYT…AVMA), 477 to 497 (AGGA…IPFA), 518 to 538 (LSMA…VLAI), and 545 to 565 (LGLY…LLIA).

It localises to the cell inner membrane. It catalyses the reaction D-fructose(out) + N(pros)-phospho-L-histidyl-[protein] = D-fructose 1-phosphate(in) + L-histidyl-[protein]. Its function is as follows. The phosphoenolpyruvate-dependent sugar phosphotransferase system (sugar PTS), a major carbohydrate active transport system, catalyzes the phosphorylation of incoming sugar substrates concomitantly with their translocation across the cell membrane. The enzyme II FruAB PTS system is involved in fructose transport. This chain is PTS system fructose-specific EIIB'BC component, found in Rhodobacter capsulatus (Rhodopseudomonas capsulata).